The chain runs to 495 residues: Glycerol kinase (495 aa).

T13 lines the ADP pocket. T13, T14, and S15 together coordinate ATP. T13 is a sn-glycerol 3-phosphate binding site. R17 contacts ADP. Residues R83, E84, Y135, and D244 each coordinate sn-glycerol 3-phosphate. Glycerol contacts are provided by R83, E84, Y135, D244, and Q245. Residues T266 and G309 each coordinate ADP. ATP contacts are provided by T266, G309, Q313, and G410. ADP contacts are provided by G410 and N414.

The protein belongs to the FGGY kinase family.

It carries out the reaction glycerol + ATP = sn-glycerol 3-phosphate + ADP + H(+). It functions in the pathway polyol metabolism; glycerol degradation via glycerol kinase pathway; sn-glycerol 3-phosphate from glycerol: step 1/1. Inhibited by fructose 1,6-bisphosphate (FBP). In terms of biological role, key enzyme in the regulation of glycerol uptake and metabolism. Catalyzes the phosphorylation of glycerol to yield sn-glycerol 3-phosphate. This chain is Glycerol kinase, found in Shewanella woodyi (strain ATCC 51908 / MS32).